The sequence spans 295 residues: Ribosomal protein L11 methyltransferase (295 aa).

Residues Thr-146, Gly-167, Asp-189, and Asn-231 each contribute to the S-adenosyl-L-methionine site.

It belongs to the methyltransferase superfamily. PrmA family.

Its subcellular location is the cytoplasm. It catalyses the reaction L-lysyl-[protein] + 3 S-adenosyl-L-methionine = N(6),N(6),N(6)-trimethyl-L-lysyl-[protein] + 3 S-adenosyl-L-homocysteine + 3 H(+). Methylates ribosomal protein L11. The chain is Ribosomal protein L11 methyltransferase from Vibrio vulnificus (strain YJ016).